A 310-amino-acid chain; its full sequence is Syntaxin-81 (310 aa).

Over 1–289 (MSRFRDRTED…QAIQRNSSSR (289 aa)) the chain is Cytoplasmic. Positions 77–114 (RTTEQEKDSIEQEVAAFIKACKEQIDILINSIRNEEAN) form a coiled coil. A helical; Anchor for type IV membrane protein transmembrane segment spans residues 290–310 (TFLLLFFFVLTFSVLFLDWYS).

It belongs to the syntaxin family. Part of the t-SNARE complex. Interacts with MAG2.

The protein localises to the membrane. Its function is as follows. Vesicle trafficking protein that functions in the secretory pathway. In Arabidopsis thaliana (Mouse-ear cress), this protein is Syntaxin-81 (SYP81).